A 727-amino-acid chain; its full sequence is Glycerol-3-phosphate dehydrogenase, mitochondrial (727 aa).

The transit peptide at M1–A42 directs the protein to the mitochondrion. D71–E99 contacts FAD. Y601 carries the post-translational modification Phosphotyrosine. EF-hand domains are found at residues S623–Q658 and M659–G694. 5 residues coordinate Ca(2+): D672, N674, N676, Q678, and E683.

It belongs to the FAD-dependent glycerol-3-phosphate dehydrogenase family. Requires FAD as cofactor.

The protein resides in the mitochondrion. The enzyme catalyses a quinone + sn-glycerol 3-phosphate = dihydroxyacetone phosphate + a quinol. Its pathway is polyol metabolism; glycerol degradation via glycerol kinase pathway; glycerone phosphate from sn-glycerol 3-phosphate (aerobic route): step 1/1. Its activity is regulated as follows. Calcium-binding enhance the activity of the enzyme. Functionally, calcium-responsive mitochondrial glycerol-3-phosphate dehydrogenase which seems to be a key component of the pancreatic beta-cell glucose-sensing device. In Bos taurus (Bovine), this protein is Glycerol-3-phosphate dehydrogenase, mitochondrial (GPD2).